The sequence spans 176 residues: Inner membrane-spanning protein YciB (176 aa).

The next 5 helical transmembrane spans lie at 23 to 43 (MIAA…FLYW), 50 to 70 (TMQW…IVLG), 74 to 94 (FIMW…LGSH), 119 to 139 (LTYM…FVFT), and 150 to 170 (MFGS…YLST).

It belongs to the YciB family.

Its subcellular location is the cell inner membrane. Functionally, plays a role in cell envelope biogenesis, maintenance of cell envelope integrity and membrane homeostasis. This chain is Inner membrane-spanning protein YciB, found in Neisseria gonorrhoeae (strain ATCC 700825 / FA 1090).